A 541-amino-acid chain; its full sequence is Serine/threonine-protein kinase akt-1 (541 aa).

A PH domain is found at 15-118 (DVVIEGWLHK…WIHAIESISK (104 aa)). Residues 193–450 (FDFLKVLGKG…ALEICRADFF (258 aa)) form the Protein kinase domain. Residues 199-207 (LGKGTFGKV) and lysine 222 each bind ATP. Aspartate 316 acts as the Proton acceptor in catalysis. Phosphothreonine is present on threonine 350. An AGC-kinase C-terminal domain is found at 451–528 (RTVDWEATYR…HNVMGSINRI (78 aa)). At serine 517 the chain carries Phosphoserine.

This sequence belongs to the protein kinase superfamily. AGC Ser/Thr protein kinase family. RAC subfamily. In terms of assembly, interacts with pdk-1, sgk-1, akt-2 and daf-16. Part of a complex containing sgk-1, akt-1 and akt-2. Interacts with cmd-1 in the presence of Ca(2+). Interacts with let-92 phosphatase regulatory subunit pptr-1. It depends on Mg(2+) as a cofactor. As to expression, expressed in neurons, muscle cells of the pharynx, rectal gland cells, vulva and spermatheca.

The catalysed reaction is L-seryl-[protein] + ATP = O-phospho-L-seryl-[protein] + ADP + H(+). It catalyses the reaction L-threonyl-[protein] + ATP = O-phospho-L-threonyl-[protein] + ADP + H(+). Its activity is regulated as follows. Phosphorylated and activated by pdk-1. Its function is as follows. Acts downstream of PI3 kinase age-1 and kinase pdk-1 in the daf-2/insulin receptor-like transduction pathway. Phosphorylates Forkhead-related daf-16 and the longevity-promoting skn-1 transcription factors, which inhibits their entry into the nucleus and antagonizes their functions. Plays a role in maintaining the gonadal basement membrane through it's role in inhibiting daf-16 activity. Has an essential role in regulating developmental arrest at the dauer stage. Plays a role in immune function and pathogen resistance. Regulates salt chemotaxis learning. Downstream of age-1 and together with akt-2 and sgk-1, promotes cell survival during embryonic development. This Caenorhabditis elegans protein is Serine/threonine-protein kinase akt-1.